Consider the following 151-residue polypeptide: UPF0756 membrane protein Lreu_0946 (151 aa).

The next 4 membrane-spanning stretches (helical) occupy residues 4–24 (WLFL…SLII), 52–72 (WGVT…QIGF), 77–97 (AAFK…VAIL), and 115–135 (LVLG…GPVI).

Belongs to the UPF0756 family.

The protein resides in the cell membrane. This Limosilactobacillus reuteri (strain DSM 20016) (Lactobacillus reuteri) protein is UPF0756 membrane protein Lreu_0946.